The sequence spans 964 residues: MPDDKRAKPEKSKYPVNLLDTPFPMRGDLPKREPQWVKQWQDKQLYKKIRAARKGAKKFVLHDGPPYANGDIHIGHAVNKVLKDMIIKARGLTGLDAVYVPGWDCHGMPIEIQIEKKFGKGLPVQEVQAKARAYATEQIKRQMMDFERLGVLGDWDHPYLTMNYSNEADELRALGKIMEKGYVFRGLKPVNWCFDCGSALAEAEVEYKDKVDLSIDVGFPFAQADKLAHAFKVPFEQLDGKPGWIVIWTTTPWTIPSNQALNVHPEVEYALVETPRGYLILATERVEEQLKVYGLEGKVVATTTGAALSEIRFHHPLAKMDAGYDRLSPVYLGDYVTTDTGSGIVHSAPAYGVEDFQSCKAHGMADSDIISPVMGNGVYAGTLPLFGGLSIWDANPKIVEVLQASGNLFNSHKYTHSYMHCWRHKTPIIYRATSQWFAGMDVDPADENGKTGPTLRETALAGIDATEFFPAWGKQRLHNMIANRPDWTLSRQRQWGVPMAFFLHKETGALHPRTPQLLEEVARRVEQHGIEAWQTLDPAELLGDEASQYEKNRDTLDVWFDSGTTHWSVIRGSHRDDLYDPSADEADGRLADLYLEGSDQHRGWFHSSLLTASMLYGKPPYKALLTHGFTVDGEGRKMSKSIGNTVSPQDISNKMGAEIIRLWVASTDYSGELSISDEILKRVVEGYRRIRNTLRFLLSNLSDYDHARHALPASEWLEIDRYAVALTAQLQKEVLSHYEAYEFHPVVSKLQTFCSEDLGGFYLDVLKDRLYTTAPDSKARRAAQNALYHITQAMLHWMAPFLSFTAEEAWQIFAHGTEHTDTIFTSTYYAIPEVDDGADDLLQKWHTLREVRAEVTKQLEAVRVEGEIGSSLQAELTIQAGGPVLDALQSLGDDLRFVLLTSSAKVTHAPEAGDLLVTVTPSTHAKCERCWHYRADVGHNPDHPTLCGRCDSNLFGAGEHRSHA.

Residues 66-76 carry the 'HIGH' region motif; it reads PYANGDIHIGH. Glu596 serves as a coordination point for L-isoleucyl-5'-AMP. The short motif at 637 to 641 is the 'KMSKS' region element; that stretch reads KMSKS. Lys640 provides a ligand contact to ATP. Zn(2+)-binding residues include Cys927, Cys930, Cys947, and Cys950.

The protein belongs to the class-I aminoacyl-tRNA synthetase family. IleS type 1 subfamily. Monomer. Zn(2+) serves as cofactor.

Its subcellular location is the cytoplasm. The enzyme catalyses tRNA(Ile) + L-isoleucine + ATP = L-isoleucyl-tRNA(Ile) + AMP + diphosphate. Functionally, catalyzes the attachment of isoleucine to tRNA(Ile). As IleRS can inadvertently accommodate and process structurally similar amino acids such as valine, to avoid such errors it has two additional distinct tRNA(Ile)-dependent editing activities. One activity is designated as 'pretransfer' editing and involves the hydrolysis of activated Val-AMP. The other activity is designated 'posttransfer' editing and involves deacylation of mischarged Val-tRNA(Ile). The sequence is that of Isoleucine--tRNA ligase from Cupriavidus necator (strain ATCC 17699 / DSM 428 / KCTC 22496 / NCIMB 10442 / H16 / Stanier 337) (Ralstonia eutropha).